Here is a 600-residue protein sequence, read N- to C-terminus: Methionine--tRNA ligase (600 aa).

The short motif at 12–22 is the 'HIGH' region element; sequence PYANGPRHIGH. The Zn(2+) site is built by cysteine 144, cysteine 147, cysteine 157, and cysteine 160. The 'KMSKS' region motif lies at 351 to 355; sequence KFSSS. Residue serine 354 participates in ATP binding.

This sequence belongs to the class-I aminoacyl-tRNA synthetase family. MetG type 1 subfamily. In terms of assembly, monomer. The cofactor is Zn(2+).

It is found in the cytoplasm. The catalysed reaction is tRNA(Met) + L-methionine + ATP = L-methionyl-tRNA(Met) + AMP + diphosphate. Its function is as follows. Is required not only for elongation of protein synthesis but also for the initiation of all mRNA translation through initiator tRNA(fMet) aminoacylation. The protein is Methionine--tRNA ligase of Chloroflexus aurantiacus (strain ATCC 29364 / DSM 637 / Y-400-fl).